The chain runs to 157 residues: Ribosomal RNA large subunit methyltransferase H (157 aa).

S-adenosyl-L-methionine is bound by residues leucine 73, glycine 105, and 124–129 (LSKMTF).

Belongs to the RNA methyltransferase RlmH family. As to quaternary structure, homodimer.

Its subcellular location is the cytoplasm. It catalyses the reaction pseudouridine(1915) in 23S rRNA + S-adenosyl-L-methionine = N(3)-methylpseudouridine(1915) in 23S rRNA + S-adenosyl-L-homocysteine + H(+). Its function is as follows. Specifically methylates the pseudouridine at position 1915 (m3Psi1915) in 23S rRNA. The chain is Ribosomal RNA large subunit methyltransferase H from Christiangramia forsetii (strain DSM 17595 / CGMCC 1.15422 / KT0803) (Gramella forsetii).